An 89-amino-acid chain; its full sequence is Small ribosomal subunit protein uS15 (89 aa).

The protein belongs to the universal ribosomal protein uS15 family. In terms of assembly, part of the 30S ribosomal subunit. Forms a bridge to the 50S subunit in the 70S ribosome, contacting the 23S rRNA.

Its function is as follows. One of the primary rRNA binding proteins, it binds directly to 16S rRNA where it helps nucleate assembly of the platform of the 30S subunit by binding and bridging several RNA helices of the 16S rRNA. Functionally, forms an intersubunit bridge (bridge B4) with the 23S rRNA of the 50S subunit in the ribosome. This Photorhabdus luminescens (Xenorhabdus luminescens) protein is Small ribosomal subunit protein uS15.